The following is a 379-amino-acid chain: Alpha-humulene synthase eupE (379 aa).

This sequence belongs to the terpene synthase family. Alpha-humulene synthase eupE subfamily. Mg(2+) serves as cofactor.

It carries out the reaction (2E,6E)-farnesyl diphosphate = alpha-humulene + diphosphate. It participates in secondary metabolite biosynthesis; terpenoid biosynthesis. In terms of biological role, alpha-humulene synthase; part of the gene cluster that mediates the biosynthesis of eupenifeldin, a bistropolone meroterpenoid that acts as an antitumor agent. The first step of eupenifeldin biosynthesis is the biosynthesis of 3-methylorcinaldehyde performed by the non-reducing polyketide synthase eupA. Oxidative dearomatization of 3-methylorcinaldehyde likely catalyzed by the FAD-dependent monooxygenase eupB is followed by oxidative ring expansion by the 2-oxoglutarate-dependent dioxygenase eupC to provide the first tropolone metabolite, tropolone stipitaldehyde. In parallel, generation of sesquiterpene alpha-humulene from farnesylpyrophosphate (FPP) is catalyzed by the terpene cyclase eupE. The cytochrome P450 monooxygenase eupD then hydroxylates humulene to humulenol. The putative Diels-Alderase eupF probably catalyzes the formation of the tropolone-humulene skeleton by linking humulenol and the polyketide moiety. The short-chain dehydrogenase/reductase eupG and the flavin-dependent monooxygenase eupH are also essential for eupenifeldin biosynthesis and are likely the additional decorating enzymes of the tropolone-humulene skeleton to produce final eupenifeldin or derivatives. This is Alpha-humulene synthase eupE from Phoma sp.